Consider the following 459-residue polypeptide: E3 ubiquitin-protein ligase RNF14 (459 aa).

The region spanning 10 to 129 is the RWD domain; it reads DELLALASIY…QFLKEETLDF (120 aa). The interval 141–169 is disordered; the sequence is SGSQPQCEPAQKHAADASGEKSKVQDLDP. A compositionally biased stretch (basic and acidic residues) spans 150-169; it reads AQKHAADASGEKSKVQDLDP. A TRIAD supradomain region spans residues 200–441; the sequence is KAFCCGICYS…NPDSPCYNQL (242 aa). The Zn(2+) site is built by C204, C207, C222, H224, C227, C230, C249, C254, C293, C298, C313, C316, C321, C324, H329, C334, C388, and C391. RING-type zinc fingers lie at residues 204–249 and 204–254; these read CGIC…CLNC and CGIC…EPKC. An IBR-type zinc finger spans residues 273 to 334; it reads ARYDRLLLQS…RRSYHGLSHC (62 aa). The RING-type 2; atypical zinc finger occupies 388-417; it reads CPCCGTNIQKAHGCNKMTCSSCQKYFCWIC. The active site involves C401. Positions 406, 409, 414, 417, 429, and 437 each coordinate Zn(2+).

It belongs to the RBR family. RNF14 subfamily.

The protein resides in the cytoplasm. It is found in the nucleus. It catalyses the reaction [E2 ubiquitin-conjugating enzyme]-S-ubiquitinyl-L-cysteine + [acceptor protein]-L-lysine = [E2 ubiquitin-conjugating enzyme]-L-cysteine + [acceptor protein]-N(6)-ubiquitinyl-L-lysine.. Its pathway is protein modification; protein ubiquitination. Functionally, E3 ubiquitin-protein ligase that plays a key role in the RNF14-RNF25 translation quality control pathway, a pathway that takes place when a ribosome has stalled during translation, and which promotes ubiquitination and degradation of translation factors on stalled ribosomes. Recruited to stalled ribosomes by the ribosome collision sensor GCN1 and mediates 'Lys-6'-linked ubiquitination of target proteins, leading to their degradation. Mediates ubiquitination of eef1a1/eEF1A and etf1/eRF1 translation factors on stalled ribosomes, leading to their degradation. Specifically required to resolve RNA-protein cross-links caused by reactive aldehydes, which trigger translation stress by stalling ribosomes: acts by catalying 'Lys-6'-linked ubiquitination of RNA-protein cross-links, leading to their removal by the ATP-dependent unfoldase VCP and subsequent degradation by the proteasome. Independently of its function in the response to stalled ribosomes, acts as a regulator of transcription in Wnt signaling via its interaction with TCF transcription factors (tcf7/tcf1, tcf7l1/tcf3 and tcf7l2/tcf4). In Danio rerio (Zebrafish), this protein is E3 ubiquitin-protein ligase RNF14.